Here is a 140-residue protein sequence, read N- to C-terminus: Zinc finger SWIM domain-containing protein 7 (140 aa).

The SWIM-type zinc-finger motif lies at 76-114 (YTCFTSCHYCPCPAFSFTVLRRNESLMCKHLLAVILSQA).

It belongs to the SWS1 family.

The protein localises to the nucleus. Functionally, involved in early stages of the homologous recombination repair (HRR) pathway of double-stranded DNA breaks arising during DNA replication or induced by DNA-damaging agents. The sequence is that of Zinc finger SWIM domain-containing protein 7 (zswim7) from Danio rerio (Zebrafish).